Reading from the N-terminus, the 379-residue chain is Queuine tRNA-ribosyltransferase (379 aa).

Residue Asp94 is the Proton acceptor of the active site. Residues 94 to 98 (DSGGF), Asp148, Gln191, and Gly218 each bind substrate. The interval 249-255 (GVGSPDS) is RNA binding. Asp268 (nucleophile) is an active-site residue. The segment at 273-277 (TRIAR) is RNA binding; important for wobble base 34 recognition. 4 residues coordinate Zn(2+): Cys306, Cys308, Cys311, and His337.

The protein belongs to the queuine tRNA-ribosyltransferase family. In terms of assembly, homodimer. Within each dimer, one monomer is responsible for RNA recognition and catalysis, while the other monomer binds to the replacement base PreQ1. It depends on Zn(2+) as a cofactor.

It catalyses the reaction 7-aminomethyl-7-carbaguanine + guanosine(34) in tRNA = 7-aminomethyl-7-carbaguanosine(34) in tRNA + guanine. It participates in tRNA modification; tRNA-queuosine biosynthesis. In terms of biological role, catalyzes the base-exchange of a guanine (G) residue with the queuine precursor 7-aminomethyl-7-deazaguanine (PreQ1) at position 34 (anticodon wobble position) in tRNAs with GU(N) anticodons (tRNA-Asp, -Asn, -His and -Tyr). Catalysis occurs through a double-displacement mechanism. The nucleophile active site attacks the C1' of nucleotide 34 to detach the guanine base from the RNA, forming a covalent enzyme-RNA intermediate. The proton acceptor active site deprotonates the incoming PreQ1, allowing a nucleophilic attack on the C1' of the ribose to form the product. After dissociation, two additional enzymatic reactions on the tRNA convert PreQ1 to queuine (Q), resulting in the hypermodified nucleoside queuosine (7-(((4,5-cis-dihydroxy-2-cyclopenten-1-yl)amino)methyl)-7-deazaguanosine). The protein is Queuine tRNA-ribosyltransferase of Bacillus mycoides (strain KBAB4) (Bacillus weihenstephanensis).